The primary structure comprises 462 residues: Putative F-box protein At1g12855 (462 aa).

Basic and acidic residues predominate over residues 1 to 22 (MESREDSFISKEKKSTMKKEKQ). The segment at 1-59 (MESREDSFISKEKKSTMKKEKQAIASQRNRRRVIKNRGNGKRLIASLSQRKRRRIPRGR) is disordered. A compositionally biased stretch (basic residues) spans 28-40 (RNRRRVIKNRGNG). The 46-residue stretch at 65–110 (VFAPSSLPNDVVEEIFLRLPVKAIIQLKSLSKQWRSTIESRSFEER) folds into the F-box domain.

This Arabidopsis thaliana (Mouse-ear cress) protein is Putative F-box protein At1g12855.